We begin with the raw amino-acid sequence, 630 residues long: tRNA uridine 5-carboxymethylaminomethyl modification enzyme MnmG (630 aa).

Residue 15–20 (GAGHAG) coordinates FAD. Position 276-290 (276-290 (GPRYCPSIEDKIVRF)) interacts with NAD(+).

Belongs to the MnmG family. In terms of assembly, homodimer. Heterotetramer of two MnmE and two MnmG subunits. It depends on FAD as a cofactor.

It localises to the cytoplasm. In terms of biological role, NAD-binding protein involved in the addition of a carboxymethylaminomethyl (cmnm) group at the wobble position (U34) of certain tRNAs, forming tRNA-cmnm(5)s(2)U34. This is tRNA uridine 5-carboxymethylaminomethyl modification enzyme MnmG from Latilactobacillus sakei subsp. sakei (strain 23K) (Lactobacillus sakei subsp. sakei).